We begin with the raw amino-acid sequence, 486 residues long: Protein nucleotidyltransferase YdiU (486 aa).

ATP-binding residues include Gly-90, Gly-92, Arg-93, Lys-113, Asp-125, Gly-126, Arg-176, and Arg-183. Asp-252 functions as the Proton acceptor in the catalytic mechanism. The Mg(2+) site is built by Asn-253 and Asp-262. Position 262 (Asp-262) interacts with ATP.

Belongs to the SELO family. Mg(2+) is required as a cofactor. It depends on Mn(2+) as a cofactor.

It catalyses the reaction L-seryl-[protein] + ATP = 3-O-(5'-adenylyl)-L-seryl-[protein] + diphosphate. The enzyme catalyses L-threonyl-[protein] + ATP = 3-O-(5'-adenylyl)-L-threonyl-[protein] + diphosphate. The catalysed reaction is L-tyrosyl-[protein] + ATP = O-(5'-adenylyl)-L-tyrosyl-[protein] + diphosphate. It carries out the reaction L-histidyl-[protein] + UTP = N(tele)-(5'-uridylyl)-L-histidyl-[protein] + diphosphate. It catalyses the reaction L-seryl-[protein] + UTP = O-(5'-uridylyl)-L-seryl-[protein] + diphosphate. The enzyme catalyses L-tyrosyl-[protein] + UTP = O-(5'-uridylyl)-L-tyrosyl-[protein] + diphosphate. Nucleotidyltransferase involved in the post-translational modification of proteins. It can catalyze the addition of adenosine monophosphate (AMP) or uridine monophosphate (UMP) to a protein, resulting in modifications known as AMPylation and UMPylation. The sequence is that of Protein nucleotidyltransferase YdiU from Pseudomonas paraeruginosa (strain DSM 24068 / PA7) (Pseudomonas aeruginosa (strain PA7)).